We begin with the raw amino-acid sequence, 112 residues long: Ribonuclease P protein component (112 aa).

It belongs to the RnpA family. Consists of a catalytic RNA component (M1 or rnpB) and a protein subunit.

The catalysed reaction is Endonucleolytic cleavage of RNA, removing 5'-extranucleotides from tRNA precursor.. RNaseP catalyzes the removal of the 5'-leader sequence from pre-tRNA to produce the mature 5'-terminus. It can also cleave other RNA substrates such as 4.5S RNA. The protein component plays an auxiliary but essential role in vivo by binding to the 5'-leader sequence and broadening the substrate specificity of the ribozyme. The protein is Ribonuclease P protein component of Mycoplasmopsis synoviae (strain 53) (Mycoplasma synoviae).